The chain runs to 409 residues: Putative competence-damage inducible protein (409 aa).

This sequence belongs to the CinA family.

The chain is Putative competence-damage inducible protein from Clostridium botulinum (strain Langeland / NCTC 10281 / Type F).